A 333-amino-acid chain; its full sequence is S-adenosylmethionine decarboxylase proenzyme (333 aa).

F7 is a binding site for substrate. Catalysis depends on residues E8 and E11. A substrate-binding site is contributed by E67. Catalysis depends on S68, which acts as the Schiff-base intermediate with substrate; via pyruvic acid. The residue at position 68 (S68) is a Pyruvic acid (Ser); by autocatalysis. C82 serves as the catalytic Proton donor; for catalytic activity. Residue F223 participates in substrate binding. Residues S229 and H243 each act as proton acceptor; for processing activity in the active site. E247 contributes to the substrate binding site. The residue at position 298 (S298) is a Phosphoserine.

It belongs to the eukaryotic AdoMetDC family. Heterotetramer of two alpha and two beta chains. It depends on pyruvate as a cofactor. Is synthesized initially as an inactive proenzyme. Formation of the active enzyme involves a self-maturation process in which the active site pyruvoyl group is generated from an internal serine residue via an autocatalytic post-translational modification. Two non-identical subunits are generated from the proenzyme in this reaction, and the pyruvate is formed at the N-terminus of the alpha chain, which is derived from the carboxyl end of the proenzyme. The post-translation cleavage follows an unusual pathway, termed non-hydrolytic serinolysis, in which the side chain hydroxyl group of the serine supplies its oxygen atom to form the C-terminus of the beta chain, while the remainder of the serine residue undergoes an oxidative deamination to produce ammonia and the pyruvoyl group blocking the N-terminus of the alpha chain.

The catalysed reaction is S-adenosyl-L-methionine + H(+) = S-adenosyl 3-(methylsulfanyl)propylamine + CO2. It participates in amine and polyamine biosynthesis; S-adenosylmethioninamine biosynthesis; S-adenosylmethioninamine from S-adenosyl-L-methionine: step 1/1. In terms of biological role, essential for biosynthesis of the polyamines spermidine and spermine. Promotes maintenance and self-renewal of embryonic stem cells, by maintaining spermine levels. In Rattus norvegicus (Rat), this protein is S-adenosylmethionine decarboxylase proenzyme (Amd1).